We begin with the raw amino-acid sequence, 178 residues long: Epididymal-specific lipocalin-9 (178 aa).

Positions 1–16 (MVLLLVLGLVLSLATA) are cleaved as a signal peptide. N-linked (GlcNAc...) asparagine glycans are attached at residues asparagine 46, asparagine 68, and asparagine 129. A disulfide bridge links cysteine 83 with cysteine 176.

The protein belongs to the calycin superfamily. Lipocalin family. In terms of tissue distribution, expressed in epididymis. Not detected in all other tissues tested.

The protein resides in the secreted. In Mus musculus (Mouse), this protein is Epididymal-specific lipocalin-9 (Lcn9).